The following is a 287-amino-acid chain: MLQMAISNLDGVSSAKVEINCVIAPHKAQAQIPGLANVKNIVAVASGKGGVGKSTTAANLALALAREGARVGILDADIYGPSQGVMFGIAEGTRPKIRDQKWFVPIEAHGVEVMSMAFLTDDNTPMVWRGPMVSGALLQLVTQTAWNDLDYLVIDMPPGTGDIQLTLAQKVPVAGSVIVTTPQDLALLDARKGVEMFRKVNIPVLGVVENMAVHICSNCGHAEHLFGEGGGEKLATQYGVEVLASLPLAMEIREQADNGKPTAIADPNSPIALIYQELAVTSGRGLF.

ATP is bound at residue 47–54; that stretch reads GKGGVGKS.

Belongs to the Mrp/NBP35 ATP-binding proteins family. In terms of assembly, homodimer.

Binds and transfers iron-sulfur (Fe-S) clusters to target apoproteins. Can hydrolyze ATP. The polypeptide is Iron-sulfur cluster carrier protein (Pseudomonas fragi).